Reading from the N-terminus, the 372-residue chain is Lipoyl synthase, mitochondrial (372 aa).

The N-terminal 27 residues, 1 to 27, are a transit peptide targeting the mitochondrion; that stretch reads MSLRCGDAARTLGPRVFGRYFCSPVRP. Cysteine 106, cysteine 111, cysteine 117, cysteine 137, cysteine 141, cysteine 144, and serine 352 together coordinate [4Fe-4S] cluster. The Radical SAM core domain maps to 122 to 341; it reads EYATATATIM…EKVGNELGFH (220 aa).

The protein belongs to the radical SAM superfamily. Lipoyl synthase family. [4Fe-4S] cluster serves as cofactor.

It localises to the mitochondrion. It carries out the reaction [[Fe-S] cluster scaffold protein carrying a second [4Fe-4S](2+) cluster] + N(6)-octanoyl-L-lysyl-[protein] + 2 oxidized [2Fe-2S]-[ferredoxin] + 2 S-adenosyl-L-methionine + 4 H(+) = [[Fe-S] cluster scaffold protein] + N(6)-[(R)-dihydrolipoyl]-L-lysyl-[protein] + 4 Fe(3+) + 2 hydrogen sulfide + 2 5'-deoxyadenosine + 2 L-methionine + 2 reduced [2Fe-2S]-[ferredoxin]. It participates in protein modification; protein lipoylation via endogenous pathway; protein N(6)-(lipoyl)lysine from octanoyl-[acyl-carrier-protein]: step 2/2. In terms of biological role, catalyzes the radical-mediated insertion of two sulfur atoms into the C-6 and C-8 positions of the octanoyl moiety bound to the lipoyl domains of lipoate-dependent enzymes, thereby converting the octanoylated domains into lipoylated derivatives. The sequence is that of Lipoyl synthase, mitochondrial from Homo sapiens (Human).